We begin with the raw amino-acid sequence, 278 residues long: Gap junction delta-3 protein (278 aa).

The Cytoplasmic segment spans residues M1 to L24. The helical transmembrane segment at W25–F45 threads the bilayer. The Extracellular portion of the chain corresponds to E46–R76. Residues F77–M97 form a helical membrane-spanning segment. At H98–Y136 the chain is on the cytoplasmic side. A helical membrane pass occupies residues L137–L157. Topologically, residues Y158–T188 are extracellular. A helical transmembrane segment spans residues V189–L209. Residues G210–I278 are Cytoplasmic-facing. Positions L223–I278 are disordered.

This sequence belongs to the connexin family. Delta-type subfamily. As to quaternary structure, a connexon is composed of a hexamer of connexins.

The protein localises to the cell membrane. The protein resides in the cell junction. It localises to the gap junction. In terms of biological role, one gap junction consists of a cluster of closely packed pairs of transmembrane channels, the connexons, through which materials of low MW diffuse from one cell to a neighboring cell. This Mus musculus (Mouse) protein is Gap junction delta-3 protein (Gjd3).